A 432-amino-acid chain; its full sequence is Glutamyl-tRNA reductase (432 aa).

Substrate contacts are provided by residues Thr49 to Arg52, Ser107, Glu112 to Gln114, and Gln118. Cys50 acts as the Nucleophile in catalysis. Residue Gly186–Gly191 coordinates NADP(+).

The protein belongs to the glutamyl-tRNA reductase family. As to quaternary structure, homodimer.

The catalysed reaction is (S)-4-amino-5-oxopentanoate + tRNA(Glu) + NADP(+) = L-glutamyl-tRNA(Glu) + NADPH + H(+). Its pathway is porphyrin-containing compound metabolism; protoporphyrin-IX biosynthesis; 5-aminolevulinate from L-glutamyl-tRNA(Glu): step 1/2. Its function is as follows. Catalyzes the NADPH-dependent reduction of glutamyl-tRNA(Glu) to glutamate 1-semialdehyde (GSA). In Campylobacter jejuni subsp. doylei (strain ATCC BAA-1458 / RM4099 / 269.97), this protein is Glutamyl-tRNA reductase.